The chain runs to 162 residues: 2-amino-4-hydroxy-6-hydroxymethyldihydropteridine pyrophosphokinase (162 aa).

This sequence belongs to the HPPK family.

It catalyses the reaction 6-hydroxymethyl-7,8-dihydropterin + ATP = (7,8-dihydropterin-6-yl)methyl diphosphate + AMP + H(+). The protein operates within cofactor biosynthesis; tetrahydrofolate biosynthesis; 2-amino-4-hydroxy-6-hydroxymethyl-7,8-dihydropteridine diphosphate from 7,8-dihydroneopterin triphosphate: step 4/4. Functionally, catalyzes the transfer of pyrophosphate from adenosine triphosphate (ATP) to 6-hydroxymethyl-7,8-dihydropterin, an enzymatic step in folate biosynthesis pathway. This chain is 2-amino-4-hydroxy-6-hydroxymethyldihydropteridine pyrophosphokinase (folK), found in Pseudomonas aeruginosa (strain ATCC 15692 / DSM 22644 / CIP 104116 / JCM 14847 / LMG 12228 / 1C / PRS 101 / PAO1).